Here is a 503-residue protein sequence, read N- to C-terminus: Sugar phosphate exchanger 3 (503 aa).

Residues 20 to 40 (YTHHHLAAFLLTFFSYSLLHA) traverse the membrane as a helical segment. 2 N-linked (GlcNAc...) asparagine glycosylation sites follow: Asn-62 and Asn-71. 5 helical membrane-spanning segments follow: residues 87–107 (TLFL…GLFI), 119–139 (LVLT…GTLT), 152–172 (LVWI…VAIM), 183–203 (FVFG…AFLA), and 214–234 (AFLV…FGLV). An N-linked (GlcNAc...) asparagine glycan is attached at Asn-275. The next 6 membrane-spanning stretches (helical) occupy residues 300–322 (GVLL…FFWL), 342–362 (IWYD…SDLM), 367–387 (PVLT…SHSP), 395–415 (FIMS…SSAI), 437–457 (GIVD…VPLI), and 466–486 (VFYF…PLIV).

Belongs to the major facilitator superfamily. Organophosphate:Pi antiporter (OPA) (TC 2.A.1.4) family.

The protein localises to the endoplasmic reticulum membrane. The protein resides in the lysosome membrane. Unlike the other SLC37 members, seems to lack glucose-6-phosphate antiporter activity. The protein is Sugar phosphate exchanger 3 (slc37a3) of Xenopus laevis (African clawed frog).